The primary structure comprises 408 residues: MLEKLLEQAGIKLDFDGEEEKKSEIVDEFSGYKINIAVVGVGGSGNNTISRLYDLGVQGADLIAMNTDAQHLAITKAHKKVLLGKHITQGKGSGGDPKVGYLAAEASAQEIAAAVDGYDLVFITAGMGNGTGTGAAPVVARIVKETARNNGRFQEPLVVSVVTFPFKTEGTVRIEKAKWGIQRLLEYSDTVIIIQNDKLLELVPKLPLQSAFRFADELIARMVKGIVETIKLNSIVNIDFADVYSIMKGGGPALIGIGESDSNNRAVDAVNNALTNKMLDVEFGSGEKALVHFTIGPDVSLEEINKAMEVVYEKLSEKSEIKWGAMVDPEMGKTVRAMVIMTGVRSPYILGNVNALTDSSSWVVPKDRRLIGDPRIEKMFPDFNGSRAGRKRPSVGDAILKELGFKEL.

GTP is bound by residues 130-132 (GTG), Glu169, Arg173, and Asp216.

This sequence belongs to the FtsZ family. As to quaternary structure, homodimer. Polymerizes to form a dynamic ring structure in a strictly GTP-dependent manner. Interacts directly with several other division proteins.

The protein localises to the cytoplasm. In terms of biological role, essential cell division protein that forms a contractile ring structure (Z ring) at the future cell division site. The regulation of the ring assembly controls the timing and the location of cell division. One of the functions of the FtsZ ring is to recruit other cell division proteins to the septum to produce a new cell wall between the dividing cells. Binds GTP and shows GTPase activity. The polypeptide is Cell division protein FtsZ 2 (Pyrococcus furiosus (strain ATCC 43587 / DSM 3638 / JCM 8422 / Vc1)).